The primary structure comprises 762 residues: Alpha-xylosidase XylQ (762 aa).

The Nucleophile role is filled by Asp414. Glu417 is a catalytic residue.

Belongs to the glycosyl hydrolase 31 family.

It is found in the cell membrane. It carries out the reaction Hydrolysis of terminal, non-reducing alpha-D-xylose residues with release of alpha-D-xylose.. In terms of biological role, involved in the metabolism of isoprimeverose. Hydrolyzes isoprimeverose into equimolar amounts of glucose and xylose. In vitro, can also use p-nitrophenyl-alpha-D-xylopyranoside (alpha-p-NPX). The chain is Alpha-xylosidase XylQ from Lactiplantibacillus pentosus (Lactobacillus pentosus).